Reading from the N-terminus, the 404-residue chain is MDYSEIMVRHGELSTKGKNRMRFINKLKNNIQDVLAPFPAITVRSDRDRTHVSLNGTDYQPIVEALKLVFGVQALSPVYKLEKSVPLLVTAVQDIMTSLYRDGLTFKIATKRSDHAFELDSRELNSLLGGAVFEVLPNIQAQMKHPDVTLKVEIRDEAAYISYEEIKGAGGLPVGTSGKGMLMLSGGIDSPVAGYLALKRGLDIEVVHFASPPYTSPGALAKAQDLTRRLTRFGGNIQFIEVPFTEIQEEIKNKAPEAYLMTLTRRFMMRITDAIREQRKGLVIVNGESLGQVASQTLESMQAINAVTSTPIIRPVVTMDKLEIIEMAQAIDTFDISIQPFEDCCTIFAPDRPKTNPKLSNAEKYEERFDIDGLVQRAVSGIVVTEITPEIVNDEVENLIDALL.

In terms of domain architecture, THUMP spans 60–165; sequence QPIVEALKLV…DEAAYISYEE (106 aa). ATP is bound by residues 183-184, 208-209, R265, G287, and Q296; these read ML and HF.

The protein belongs to the ThiI family.

Its subcellular location is the cytoplasm. The enzyme catalyses [ThiI sulfur-carrier protein]-S-sulfanyl-L-cysteine + a uridine in tRNA + 2 reduced [2Fe-2S]-[ferredoxin] + ATP + H(+) = [ThiI sulfur-carrier protein]-L-cysteine + a 4-thiouridine in tRNA + 2 oxidized [2Fe-2S]-[ferredoxin] + AMP + diphosphate. It carries out the reaction [ThiS sulfur-carrier protein]-C-terminal Gly-Gly-AMP + S-sulfanyl-L-cysteinyl-[cysteine desulfurase] + AH2 = [ThiS sulfur-carrier protein]-C-terminal-Gly-aminoethanethioate + L-cysteinyl-[cysteine desulfurase] + A + AMP + 2 H(+). It functions in the pathway cofactor biosynthesis; thiamine diphosphate biosynthesis. Catalyzes the ATP-dependent transfer of a sulfur to tRNA to produce 4-thiouridine in position 8 of tRNAs, which functions as a near-UV photosensor. Also catalyzes the transfer of sulfur to the sulfur carrier protein ThiS, forming ThiS-thiocarboxylate. This is a step in the synthesis of thiazole, in the thiamine biosynthesis pathway. The sulfur is donated as persulfide by IscS. The chain is Probable tRNA sulfurtransferase from Streptococcus pyogenes serotype M4 (strain MGAS10750).